Here is a 427-residue protein sequence, read N- to C-terminus: Isoprenylcysteine alpha-carbonyl methylesterase ICME (427 aa).

The tract at residues 26–59 is disordered; sequence EVLPDEDSDRTTLLNGEPLRRRVSGKSPVDEGPR. Helical transmembrane passes span 102–122 and 157–177; these read LLALTCYAMLLMPGFLQVAYS and VVVFVTGGAWIIGYKAWGSLL. Substrate-binding positions include 163 to 165 and 234 to 236; these read GGA and QSA. Residues serine 235, aspartate 336, and histidine 368 contribute to the active site.

This sequence belongs to the AB hydrolase superfamily. Isoprenylcysteine methylesterase family. Expressed in roots, rosette and cauline leaves, stems, flowers and siliques.

The protein resides in the endoplasmic reticulum membrane. The protein localises to the golgi apparatus membrane. It carries out the reaction [protein]-C-terminal S-[(2E,6E)-farnesyl]-L-cysteine methyl ester + H2O = [protein]-C-terminal S-[(2E,6E)-farnesyl]-L-cysteine + methanol + H(+). Catalyzes the demethylation of isoprenylcysteine methylesters. In vitro, is specific for N-acetyl-S-farnesyl-L-cysteine methyl ester (AFCme) and has low activity toward N-acetyl-S-geranyl-L-cysteine methyl ester (AGCme). Acts as a positive regulator of ABA signaling. May be involved in the demethylation and inactivation of isoprenylated negative regulators of abscisic acid (ABA) signaling. Carboxyl methylation is a reversible and potentially regulated step in the post-translational modification of prenylated proteins. This is Isoprenylcysteine alpha-carbonyl methylesterase ICME from Arabidopsis thaliana (Mouse-ear cress).